The following is a 242-amino-acid chain: Zinc import ATP-binding protein ZnuC (242 aa).

The ABC transporter domain occupies 24 to 241 (INVENLSFFY…EKFLKMFSSY (218 aa)). 56–63 (GPNGGGKT) is a binding site for ATP.

The protein belongs to the ABC transporter superfamily. Zinc importer (TC 3.A.1.15.5) family. As to quaternary structure, the complex is composed of two ATP-binding proteins (ZnuC), two transmembrane proteins (ZnuB) and a solute-binding protein (ZnuA).

It is found in the cell inner membrane. It catalyses the reaction Zn(2+)(out) + ATP(in) + H2O(in) = Zn(2+)(in) + ADP(in) + phosphate(in) + H(+)(in). Part of the ABC transporter complex ZnuABC involved in zinc import. Responsible for energy coupling to the transport system. The chain is Zinc import ATP-binding protein ZnuC from Ehrlichia chaffeensis (strain ATCC CRL-10679 / Arkansas).